Here is a 254-residue protein sequence, read N- to C-terminus: Serotonin N-acetyltransferase 1, chloroplastic (254 aa).

The N-terminal 83 residues, 1 to 83 (MASAASASAS…NSTETVEPPS (83 aa)), are a transit peptide targeting the chloroplast. Positions 119 to 254 (VNVYDLQALC…IKGMFWYPRF (136 aa)) constitute an N-acetyltransferase domain.

It is found in the plastid. Its subcellular location is the chloroplast. The protein resides in the nucleus. The catalysed reaction is a 2-arylethylamine + acetyl-CoA = an N-acetyl-2-arylethylamine + CoA + H(+). It functions in the pathway aromatic compound metabolism; melatonin biosynthesis; melatonin from serotonin: step 1/2. Its function is as follows. Catalyzes the N-acetylation of serotonin into N-acetylserotonin, the penultimate step in the synthesis of melatonin. Catalyzes in vitro the N-acetylation of tryptamine to produce N-acetyltryptamine, 5-methoxytryptamine to produce melatonin and tyramine to produce N-acetyltyramine. Acetyltransferase required for geminivirus infection and systemic spread. The chain is Serotonin N-acetyltransferase 1, chloroplastic from Oryza sativa subsp. indica (Rice).